The chain runs to 20 residues: uncharacterized protein (20 aa).

This is an uncharacterized protein from Serratia marcescens.